We begin with the raw amino-acid sequence, 447 residues long: Putative branched-chain amino acid carrier protein SAUSA300_1300 (447 aa).

The next 12 helical transmembrane spans lie at 6–26 (WVIG…IFPP), 40–60 (ILAF…VGAL), 74–94 (PKFS…LFAI), 114–134 (SSIA…YICL), 143–163 (IGSL…IKGY), 193–213 (GYLT…VNAV), 229–249 (LTAG…LGYI), 290–310 (LLGI…IVAV), 326–346 (FVLV…NAVI), 350–370 (IPVL…ILIA), 382–402 (IPVI…LGWL), and 417–437 (LEWF…GIFV).

Belongs to the branched chain amino acid transporter family.

It is found in the cell membrane. Component of the transport system for branched-chain amino acids (leucine, isoleucine and valine), which is coupled to a proton motive force (Potential). Contributes to NaCl tolerance. The protein is Putative branched-chain amino acid carrier protein SAUSA300_1300 of Staphylococcus aureus (strain USA300).